A 361-amino-acid chain; its full sequence is Hydroxyproline O-arabinosyltransferase PLENTY (361 aa).

The chain crosses the membrane as a helical; Signal-anchor span at residues 13 to 33 (LLMLLMVLGFFFATYNLVSMI).

It localises to the golgi apparatus membrane. It carries out the reaction trans-4-hydroxy-L-prolyl-[protein] + UDP-beta-L-arabinofuranose = O-(beta-L-arabinofuranosyl)-trans-4-hydroxy-L-prolyl-[protein] + UDP + H(+). Functionally, glycosyltransferase involved in the O-arabinosylation of several proteins including extensins and small signaling peptides. Catalyzes the transfer of the initial L-arabinose to the hydroxyl group of Hyp residues. Probably involved in the arabinosylation of CLAVATA3/ESR-related (CLE) signaling peptides that move from root to shoot, to interact with receptor kinase signaling that regulates nodulation. Involved in long distance nodulation signaling events. Involved in the autoregulation of nodulation (AON), a long distance systemic signaling from root to shoot and back again, which allows legumes to limit the number of root nodules formed based on available nitrogen and previous rhizobial colonization. In Lotus japonicus (Lotus corniculatus var. japonicus), this protein is Hydroxyproline O-arabinosyltransferase PLENTY.